We begin with the raw amino-acid sequence, 87 residues long: MKSFMVFVLIFACFSCYYAQESTNFYCGRTLSRALAVLCYGAESKRDAGWWIPQHGHHALAGVRGKRGPVDECCEKACSIQELMTYC.

An N-terminal signal peptide occupies residues 1-19 (MKSFMVFVLIFACFSCYYA). The propeptide occupies 20 to 44 (QESTNFYCGRTLSRALAVLCYGAES). Arg-64 is subject to Arginine amide. Residues 68–87 (GPVDECCEKACSIQELMTYC) constitute a propeptide that is removed on maturation.

Belongs to the insulin family. As to expression, DAGWWIPQHGHHALAGVR-amide: Expressed in corpora cardiaca (CC), corpora allata (CA), antennal lobe (AL) and gnathal ganglion (GNG) (at protein level). Expression in CC and CA detected in most animals, in AL and GNG in few animals (at protein level).

Its subcellular location is the secreted. The chain is Insulin-related peptide 1 from Agrotis ipsilon (Black cutworm moth).